The primary structure comprises 997 residues: Malignant fibrous histiocytoma-amplified sequence 1 homolog (997 aa).

14 LRR repeats span residues 32–53 (SLRQ…ADLG), 54–76 (DVEV…QSLS), 79–100 (NLHV…VYHL), 102–123 (RLTE…VGLL), 125–146 (KLKK…LGML), 148–170 (DLEE…QGLP), 171–192 (SLRT…LFHV), 194–216 (ALEE…IRSM), 218–239 (SLKI…ICEL), 241–262 (NLES…FGAL), 264–286 (KLKM…LQLV), 287–308 (DLEE…ISCM), 310–331 (KLVT…IVEL), and 333–354 (FLEE…FGKL). A Roc domain is found at 393-626 (QPAVKPRLKL…EKLLSVAEHR (234 aa)). Residues 637 to 861 (PKSWQMLEEL…RFSVQINSHI (225 aa)) enclose the COR domain.

Its subcellular location is the cytoplasm. In terms of biological role, probable GTP-binding protein. Functions in innate immunity and more specifically the inflammatory response as a regulator of the Toll-like receptor TLR2 and TLR4 signaling pathways. The protein is Malignant fibrous histiocytoma-amplified sequence 1 homolog (mfhas1) of Xenopus tropicalis (Western clawed frog).